The primary structure comprises 242 residues: Probable 2-phosphosulfolactate phosphatase (242 aa).

The protein belongs to the ComB family. The cofactor is Mg(2+).

It carries out the reaction (2R)-O-phospho-3-sulfolactate + H2O = (2R)-3-sulfolactate + phosphate. The sequence is that of Probable 2-phosphosulfolactate phosphatase from Prochlorococcus marinus (strain NATL1A).